Reading from the N-terminus, the 130-residue chain is Large ribosomal subunit protein bL19 (130 aa).

It belongs to the bacterial ribosomal protein bL19 family.

Its function is as follows. This protein is located at the 30S-50S ribosomal subunit interface and may play a role in the structure and function of the aminoacyl-tRNA binding site. The protein is Large ribosomal subunit protein bL19 of Burkholderia lata (strain ATCC 17760 / DSM 23089 / LMG 22485 / NCIMB 9086 / R18194 / 383).